Consider the following 619-residue polypeptide: Probable ATP-dependent RNA helicase DDX59 (619 aa).

Positions 1-101 are disordered; that stretch reads MFVPRSLKIK…KSFSKTQRWP (101 aa). Basic and acidic residues predominate over residues 12-27; it reads SSNDDLKSGEAKKSKP. A Glycyl lysine isopeptide (Lys-Gly) (interchain with G-Cter in SUMO2) cross-link involves residue K26. Over residues 59–76 the composition is skewed to polar residues; it reads ASSTNSPSCQLAEVSSTG. S64 bears the Phosphoserine mark. Residues 79–91 show a composition bias toward basic and acidic residues; sequence EGVKDSHPSEEPV. Residues 104 to 133 form an HIT-type zinc finger; it reads GEPVCVVCGRYGEYICDKTDEDVCSLECKA. At S160 the chain carries Phosphoserine. The Q motif motif lies at 203–231; that stretch reads IDFEHCGFPETLNQNLKKSGYEVPTPIQM. The region spanning 234 to 405 is the Helicase ATP-binding domain; the sequence is IPVGLLGRDI…DQLLHNPVRI (172 aa). 247–254 lines the ATP pocket; sequence ADTGSGKT. A DEAD box motif is present at residues 353-356; that stretch reads DEAD. The region spanning 416–579 is the Helicase C-terminal domain; it reads SVRQIILWVE…ILPPQLLNSP (164 aa). A compositionally biased stretch (basic and acidic residues) spans 583–594; that stretch reads EQKRKEQQKDRQ. Positions 583–603 are disordered; sequence EQKRKEQQKDRQTQNSLVTGA.

The protein belongs to the DEAD box helicase family. DDX59 subfamily. In terms of assembly, interacts (via HIT-type zinc finger) with the RUVBL1/RUVBL2 complex in the presence of ADP.

The protein localises to the cytoplasm. The protein resides in the nucleus. It catalyses the reaction ATP + H2O = ADP + phosphate + H(+). This is Probable ATP-dependent RNA helicase DDX59 (Ddx59) from Mus musculus (Mouse).